The primary structure comprises 477 residues: Delayed-rectifier potassium channel regulatory subunit KCNS2 (477 aa).

Residues 1 to 184 lie on the Cytoplasmic side of the membrane; it reads MTRQSLWDVS…LALDNPGYSV (184 aa). Residues 185 to 206 traverse the membrane as a helical segment; that stretch reads LSRVFSVLSILVVLGSIITMCL. Topologically, residues 207–225 are extracellular; sequence NSLPDFQIPDSQGNPGEDP. The helical transmembrane segment at 226-248 threads the bilayer; it reads RFEIVEHFGIAWFTFELVARFAV. Over 249–259 the chain is Cytoplasmic; the sequence is APDFLKFFKNA. The chain crosses the membrane as a helical span at residues 260-280; it reads LNLIDLMSIVPFYITLVVNLV. Over 281–290 the chain is Extracellular; it reads VESSPTLANL. The helical; Voltage-sensor transmembrane segment at 291-311 threads the bilayer; the sequence is GRVAQVLRLMRIFRILKLARH. The Cytoplasmic portion of the chain corresponds to 312–326; that stretch reads STGLRSLGATLKYSY. Residues 327 to 348 traverse the membrane as a helical segment; that stretch reads KEVGLLLLYLSVGISIFSVVAY. The Extracellular segment spans residues 349-361; that stretch reads TIEKEENEGLATI. Residues 362–373 constitute an intramembrane region (helical); the sequence is PACWWWATVSMT. The Selectivity filter signature appears at 374-379; that stretch reads TVGYGD. The stretch at 374–381 is an intramembrane region; the sequence is TVGYGDVV. Over 382 to 388 the chain is Extracellular; the sequence is PGTTAGK. The chain crosses the membrane as a helical span at residues 389–417; sequence LTASACILAGILVVVLPITLIFNKFSHFY. At 418-477 the chain is on the cytoplasmic side; that stretch reads RRQKQLESAMRSCDFGDGMKEVPSVNLRDYYAHKVKSLMASLTNMSRSSPSELSLDDSLH.

The protein belongs to the potassium channel family. S (TC 1.A.1.2) subfamily. Kv9.2/KCNS2 sub-subfamily. In terms of assembly, heterotetramer with KCNB1 and KCNB2. Does not form homomultimers. As to expression, detected in brain, but not in the other tissues tested. Expression was highest in the olfactory bulb, cerebral cortex, hippocampus, habenula, basolateral amygdaloid nuclei and cerebellum.

The protein resides in the cell membrane. In terms of biological role, potassium channel regulatory subunit that modulate the delayed rectifier voltage-gated potassium channel activity of KCNB1 and KCNB2 by altering their kinetics, expression levels, and shifting the half-inactivation potential to more polarized values. While it does not form functional channels on its own, it can form functional heterotetrameric channels with KCNB1 and KCNB2. Each regulatory subunit has unique regulatory properties that can lead to extensive inhibition, significant changes in kinetics, and/or substantial shifts in the voltage dependencies of the inactivation process. This Mus musculus (Mouse) protein is Delayed-rectifier potassium channel regulatory subunit KCNS2.